Here is a 529-residue protein sequence, read N- to C-terminus: UDP-glucuronosyltransferase 2B9 (529 aa).

Positions 1–21 (MSVKWTSVILLIQLSFYFSSG) are cleaved as a signal peptide. N-linked (GlcNAc...) asparagine glycans are attached at residues N67, N68, and N88. Residues 494-514 (IGFLLACVATVIFVIMKCCLF) form a helical membrane-spanning segment.

This sequence belongs to the UDP-glycosyltransferase family.

The protein resides in the microsome membrane. Its subcellular location is the endoplasmic reticulum membrane. The enzyme catalyses glucuronate acceptor + UDP-alpha-D-glucuronate = acceptor beta-D-glucuronoside + UDP + H(+). UDPGT is of major importance in the conjugation and subsequent elimination of potentially toxic xenobiotics and endogenous compounds. This isozyme is active on C18, C19, and C21 steroids, bile acids, and several xenobiotics including eugenol, 1-naphthol, and p-nitrophenol. The chain is UDP-glucuronosyltransferase 2B9 (UGT2B9) from Macaca fascicularis (Crab-eating macaque).